A 317-amino-acid chain; its full sequence is ADP-L-glycero-D-manno-heptose-6-epimerase (317 aa).

NADP(+) is bound by residues 10-11 (FI), 31-32 (DD), glutamine 38, lysine 53, 75-79 (QGACS), and asparagine 92. The active-site Proton acceptor is tyrosine 139. An NADP(+)-binding site is contributed by lysine 143. Substrate is bound at residue asparagine 166. NADP(+) contacts are provided by valine 167 and lysine 175. Residue lysine 175 is the Proton acceptor of the active site. Substrate is bound by residues glycine 177, histidine 184, 198 to 201 (FEGV), arginine 211, and tyrosine 275.

The protein belongs to the NAD(P)-dependent epimerase/dehydratase family. HldD subfamily. In terms of assembly, homopentamer. NADP(+) is required as a cofactor.

The catalysed reaction is ADP-D-glycero-beta-D-manno-heptose = ADP-L-glycero-beta-D-manno-heptose. Its pathway is nucleotide-sugar biosynthesis; ADP-L-glycero-beta-D-manno-heptose biosynthesis; ADP-L-glycero-beta-D-manno-heptose from D-glycero-beta-D-manno-heptose 7-phosphate: step 4/4. Catalyzes the interconversion between ADP-D-glycero-beta-D-manno-heptose and ADP-L-glycero-beta-D-manno-heptose via an epimerization at carbon 6 of the heptose. In Shewanella frigidimarina (strain NCIMB 400), this protein is ADP-L-glycero-D-manno-heptose-6-epimerase.